The primary structure comprises 314 residues: Methionyl-tRNA formyltransferase (314 aa).

Residue 112-115 coordinates (6S)-5,6,7,8-tetrahydrofolate; sequence SLLP.

It belongs to the Fmt family.

It catalyses the reaction L-methionyl-tRNA(fMet) + (6R)-10-formyltetrahydrofolate = N-formyl-L-methionyl-tRNA(fMet) + (6S)-5,6,7,8-tetrahydrofolate + H(+). Its function is as follows. Attaches a formyl group to the free amino group of methionyl-tRNA(fMet). The formyl group appears to play a dual role in the initiator identity of N-formylmethionyl-tRNA by promoting its recognition by IF2 and preventing the misappropriation of this tRNA by the elongation apparatus. This Legionella pneumophila (strain Corby) protein is Methionyl-tRNA formyltransferase.